Here is a 235-residue protein sequence, read N- to C-terminus: Probable pyridoxal 5'-phosphate synthase subunit PDX1 (235 aa).

Lysine 16 (schiff-base intermediate with D-ribose 5-phosphate) is an active-site residue. Arginine 104 is a D-glyceraldehyde 3-phosphate binding site. D-ribose 5-phosphate is bound by residues glycine 153 and 174-175; that span reads GS.

It belongs to the PdxS/SNZ family.

It catalyses the reaction aldehydo-D-ribose 5-phosphate + D-glyceraldehyde 3-phosphate + L-glutamine = pyridoxal 5'-phosphate + L-glutamate + phosphate + 3 H2O + H(+). The protein operates within cofactor biosynthesis; pyridoxal 5'-phosphate biosynthesis. In terms of biological role, catalyzes the formation of pyridoxal 5'-phosphate from ribose 5-phosphate (RBP), glyceraldehyde 3-phosphate (G3P) and ammonia. The ammonia is provided by PDX2. Can also use ribulose 5-phosphate and dihydroxyacetone phosphate as substrates, resulting from enzyme-catalyzed isomerization of RBP and G3P, respectively. Also plays an indirect role in resistance to singlet oxygen-generating photosensitizers. This Stellaria longipes (Longstalk starwort) protein is Probable pyridoxal 5'-phosphate synthase subunit PDX1.